Here is a 350-residue protein sequence, read N- to C-terminus: Dihydroorotase (350 aa).

Residues His13 and His15 each contribute to the Zn(2+) site. Substrate-binding positions include 15-17 (HLR) and Asn41. Lys99, His136, and His174 together coordinate Zn(2+). Lys99 carries the N6-carboxylysine modification. Residue His136 coordinates substrate. Substrate is bound at residue Leu219. Asp247 provides a ligand contact to Zn(2+). The active site involves Asp247. Positions 251 and 263 each coordinate substrate.

It belongs to the metallo-dependent hydrolases superfamily. DHOase family. Class II DHOase subfamily. As to quaternary structure, homodimer. It depends on Zn(2+) as a cofactor.

It catalyses the reaction (S)-dihydroorotate + H2O = N-carbamoyl-L-aspartate + H(+). Its pathway is pyrimidine metabolism; UMP biosynthesis via de novo pathway; (S)-dihydroorotate from bicarbonate: step 3/3. Catalyzes the reversible cyclization of carbamoyl aspartate to dihydroorotate. The protein is Dihydroorotase of Allorhizobium ampelinum (strain ATCC BAA-846 / DSM 112012 / S4) (Agrobacterium vitis (strain S4)).